Here is a 236-residue protein sequence, read N- to C-terminus: Rab-like protein 3 (236 aa).

Residues 1–236 form a small GTPase-like region; sequence MASLDRVKVL…AGTLKSLHYD (236 aa). Residues 16–21, 148–150, and 179–180 contribute to the GTP site; these read GVGKSS, KLD, and DC.

The protein belongs to the small GTPase superfamily. Rab family. In terms of assembly, homodimer. Interacts with GPR89; the interaction stabilizes GPR89. Interacts with RAP1GDS1.

Required for KRAS signaling regulation and modulation of cell proliferation. Regulator of KRAS prenylation, and probably prenylation of other small GTPases. Required for lymphocyte development and function. Not required for myeloid cell development. This Homo sapiens (Human) protein is Rab-like protein 3 (RABL3).